The primary structure comprises 286 residues: Protease HtpX homolog (286 aa).

The next 2 membrane-spanning stretches (helical) occupy residues 7-27 and 29-49; these read TFML…MIGG and SGMM…YWFS. His-131 contributes to the Zn(2+) binding site. Glu-132 is a catalytic residue. His-135 lines the Zn(2+) pocket. Helical transmembrane passes span 146 to 166 and 177 to 197; these read LSAT…FFGG and IAGI…QMAI. Residue Glu-202 coordinates Zn(2+).

Belongs to the peptidase M48B family. Zn(2+) serves as cofactor.

The protein localises to the cell inner membrane. The chain is Protease HtpX homolog from Ralstonia nicotianae (strain ATCC BAA-1114 / GMI1000) (Ralstonia solanacearum).